The following is a 56-amino-acid chain: Large ribosomal subunit protein eL37 (56 aa).

Positions 19, 22, 34, and 37 each coordinate Zn(2+). The segment at 19 to 37 (CRRCGSVSLNVHTKQCTSC) adopts a C4-type zinc-finger fold.

This sequence belongs to the eukaryotic ribosomal protein eL37 family. It depends on Zn(2+) as a cofactor.

Its function is as follows. Binds to the 23S rRNA. The protein is Large ribosomal subunit protein eL37 of Methanosarcina mazei (strain ATCC BAA-159 / DSM 3647 / Goe1 / Go1 / JCM 11833 / OCM 88) (Methanosarcina frisia).